Consider the following 251-residue polypeptide: Imidazole glycerol phosphate synthase subunit HisF (251 aa).

Residues Asp-11 and Asp-130 contribute to the active site.

Belongs to the HisA/HisF family. Heterodimer of HisH and HisF.

It localises to the cytoplasm. It carries out the reaction 5-[(5-phospho-1-deoxy-D-ribulos-1-ylimino)methylamino]-1-(5-phospho-beta-D-ribosyl)imidazole-4-carboxamide + L-glutamine = D-erythro-1-(imidazol-4-yl)glycerol 3-phosphate + 5-amino-1-(5-phospho-beta-D-ribosyl)imidazole-4-carboxamide + L-glutamate + H(+). It functions in the pathway amino-acid biosynthesis; L-histidine biosynthesis; L-histidine from 5-phospho-alpha-D-ribose 1-diphosphate: step 5/9. IGPS catalyzes the conversion of PRFAR and glutamine to IGP, AICAR and glutamate. The HisF subunit catalyzes the cyclization activity that produces IGP and AICAR from PRFAR using the ammonia provided by the HisH subunit. The chain is Imidazole glycerol phosphate synthase subunit HisF from Parabacteroides distasonis (strain ATCC 8503 / DSM 20701 / CIP 104284 / JCM 5825 / NCTC 11152).